The chain runs to 860 residues: Late endosome and vacuole interface protein 11 (860 aa).

Residues 19–45 are disordered; the sequence is EIINNSDHSSSHSTSHEEEDEEEDDTE. Over residues 20-31 the composition is skewed to low complexity; that stretch reads IINNSDHSSSHS. Acidic residues predominate over residues 35–45; sequence EEEDEEEDDTE. A BED-type zinc finger spans residues 84–138; it reads KNIAKFWSHFLAIEKKLTKVKCKHCGEILTRSDASLTKTFRSHLKTKHNISANKN. Zn(2+) is bound by residues Cys-105, Cys-108, His-126, and His-131.

Belongs to the VID22 family.

Its subcellular location is the nucleus. Functionally, involved in vacuolar processing and morphology. The protein is Late endosome and vacuole interface protein 11 (ENV11) of Saccharomyces cerevisiae (strain ATCC 204508 / S288c) (Baker's yeast).